A 430-amino-acid chain; its full sequence is Tol-Pal system protein TolB (430 aa).

The first 21 residues, 1–21 (MKQALRVAVSFFMLWAAVLHA), serve as a signal peptide directing secretion.

It belongs to the TolB family. As to quaternary structure, the Tol-Pal system is composed of five core proteins: the inner membrane proteins TolA, TolQ and TolR, the periplasmic protein TolB and the outer membrane protein Pal. They form a network linking the inner and outer membranes and the peptidoglycan layer.

Its subcellular location is the periplasm. In terms of biological role, part of the Tol-Pal system, which plays a role in outer membrane invagination during cell division and is important for maintaining outer membrane integrity. TolB occupies a key intermediary position in the Tol-Pal system because it communicates directly with both membrane-embedded components, Pal in the outer membrane and TolA in the inner membrane. The protein is Tol-Pal system protein TolB of Enterobacter sp. (strain 638).